Consider the following 146-residue polypeptide: Snaclec echicetin subunit beta (146 aa).

The N-terminal stretch at 1-23 (MGRFISVSFGLLVLLLSLSGTGA) is a signal peptide. 3 disulfides stabilise this stretch: Cys-25/Cys-36, Cys-53/Cys-142, and Cys-119/Cys-134. A C-type lectin domain is found at 32–143 (YEGYCYKVFK…CTWTFSFVCK (112 aa)).

It belongs to the snaclec family. Heterodimer of subunits alpha and beta; disulfide-linked. In terms of tissue distribution, expressed by the venom gland.

The protein localises to the secreted. Its function is as follows. Binding of echicetin to glycoprotein Ibalpha (GP1BA) receptor on platelets alone results in inhibition of platelet aggregation, while binding to both GPIba receptor and IgMk promotes platelet aggregation and signal transduction. This Echis carinatus (Saw-scaled viper) protein is Snaclec echicetin subunit beta.